A 229-amino-acid polypeptide reads, in one-letter code: MAVEFDEETMQELYTWVDTIPLSRPKRNIARDFSDGVLTAELVKFYFPKLVEMHNYVPANSTTQKLSNWTILNRKVLSKLSFSVPDDVIRKIVQCSPGVVELVLNTLRQKIEEKQRLHHISADLSQDQATQNNGNTHSDKGYKSNGTELSPRQGARVDPASKTHQGYAQAANADTTLRFQLAEKEQTLILSQETIQILQAKLRRLEQLLLLKNVRIDDLTRRLQELEKK.

In terms of domain architecture, Calponin-homology (CH) spans 7 to 115; sequence EETMQELYTW…TLRQKIEEKQ (109 aa). The tract at residues 122–169 is disordered; that stretch reads ADLSQDQATQNNGNTHSDKGYKSNGTELSPRQGARVDPASKTHQGYAQ. Polar residues predominate over residues 123-136; it reads DLSQDQATQNNGNT. The essential for homodimerization and microtubule bundling activity stretch occupies residues 178–229; sequence RFQLAEKEQTLILSQETIQILQAKLRRLEQLLLLKNVRIDDLTRRLQELEKK.

Homodimer.

Its subcellular location is the cytoplasm. The protein localises to the cytoskeleton. The protein resides in the cilium axoneme. It localises to the apical cell membrane. Its function is as follows. Microtubule-associated protein involved in the stabilization of microtubules along the axis of migration during radial intercalation. Promotes the establishment and stabilization of an axis of microtubules required for the active migration of cells into the outer epithelium. Microtubule-associated protein that promotes microtubule bundling and stabilizes microtubules against depolymerization in response to cold shock. Essential for ciliary central apparatus formation which requires both its microtubule-binding and bundling activities. Regulates planar cell polarity signaling pathway and asymmetric microtubule accumulation in ciliated epithelia. This is Sperm flagellar protein 1 from Xenopus laevis (African clawed frog).